A 198-amino-acid polypeptide reads, in one-letter code: uncharacterized protein (198 aa).

Positions 166–198 (GYEPDEKARKKRERVKRSEVEDQLKINVKPTRR) are disordered.

This is an uncharacterized protein from Coxiella burnetii (strain RSA 493 / Nine Mile phase I).